A 1891-amino-acid polypeptide reads, in one-letter code: Protein TIC 214 (1891 aa).

Helical transmembrane passes span 18-38 (IINS…FSIG), 64-84 (FITG…HLAL), 87-107 (PHTI…WNNH), 124-144 (LSIQ…HFIL), 172-192 (VGWL…LVWI), and 221-241 (IFSI…PSPI). Disordered stretches follow at residues 248 to 300 (EASK…EGWD), 788 to 807 (EEQT…DNKR), and 1580 to 1607 (KNRS…NLSP). Positions 256-268 (VESEEERDVEIET) are enriched in acidic residues. The span at 1582–1601 (RSQEAKEPPSQRERGSDIEN) shows a compositional bias: basic and acidic residues.

This sequence belongs to the TIC214 family. As to quaternary structure, part of the Tic complex.

It localises to the plastid. The protein localises to the chloroplast inner membrane. Its function is as follows. Involved in protein precursor import into chloroplasts. May be part of an intermediate translocation complex acting as a protein-conducting channel at the inner envelope. This Solanum lycopersicum (Tomato) protein is Protein TIC 214.